A 196-amino-acid chain; its full sequence is Calcineurin B homologous protein 2 (196 aa).

Gly-2 is lipidated: N-myristoyl glycine. 4 consecutive EF-hand domains span residues 26–61 (ASLL…AVNP), 71–106 (FPNG…PKQP), 111–146 (SRMN…MVGV), and 152–187 (QLES…MNIE). At Ser-27 the chain carries Phosphoserine. The Ca(2+) site is built by Asp-124, Asp-126, Asp-128, Lys-130, and Glu-135. The short motif at 137 to 148 (LQVLRLMVGVQV) is the Nuclear export signal element. The Ca(2+) site is built by Asp-165, Asp-167, Asp-169, and Glu-176.

The protein belongs to the calcineurin regulatory subunit family. CHP subfamily. As to quaternary structure, interacts with PPP3CA. Interacts with SLC9A1/NHE1; the interaction occurs in a calcium-dependent manner. Interacts with SLC9A1/NHE1.

It localises to the cytoplasm. The protein resides in the nucleus. The protein localises to the cell membrane. Functionally, functions as an integral cofactor in cell pH regulation by controlling plasma membrane-type Na(+)/H(+) exchange activity. Binds to and activates SLC9A1/NHE1 in a serum-independent manner, thus increasing pH and protecting cells from serum deprivation-induced death. Also plays a role in the regulation of cell proliferation and tumor growth by increasing the phosphatase activity of PPP3CA in a calcium-dependent manner. Activator of the calcineurin/NFAT signaling pathway. Involved in the cytoplasmic translocation of the transcription factor NFATC3 to the nucleus. The chain is Calcineurin B homologous protein 2 (Chp2) from Mus musculus (Mouse).